Consider the following 131-residue polypeptide: Small ribosomal subunit protein uS8 (131 aa).

The protein belongs to the universal ribosomal protein uS8 family. In terms of assembly, part of the 30S ribosomal subunit. Contacts proteins S5 and S12.

One of the primary rRNA binding proteins, it binds directly to 16S rRNA central domain where it helps coordinate assembly of the platform of the 30S subunit. This is Small ribosomal subunit protein uS8 from Burkholderia lata (strain ATCC 17760 / DSM 23089 / LMG 22485 / NCIMB 9086 / R18194 / 383).